We begin with the raw amino-acid sequence, 226 residues long: Fibrillarin-like rRNA/tRNA 2'-O-methyltransferase (226 aa).

Residues 85 to 86 (TT), 104 to 105 (EF), 129 to 130 (DA), and 149 to 152 (DVAQ) contribute to the S-adenosyl-L-methionine site.

This sequence belongs to the methyltransferase superfamily. Fibrillarin family. Interacts with nop5. Component of box C/D small ribonucleoprotein (sRNP) particles that contain rpl7ae, FlpA and nop5, plus a guide RNA.

In terms of biological role, involved in pre-rRNA and tRNA processing. Utilizes the methyl donor S-adenosyl-L-methionine to catalyze the site-specific 2'-hydroxyl methylation of ribose moieties in rRNA and tRNA. Site specificity is provided by a guide RNA that base pairs with the substrate. Methylation occurs at a characteristic distance from the sequence involved in base pairing with the guide RNA. This chain is Fibrillarin-like rRNA/tRNA 2'-O-methyltransferase, found in Thermococcus onnurineus (strain NA1).